The chain runs to 308 residues: Porphobilinogen deaminase (308 aa).

The residue at position 243 (Cys-243) is an S-(dipyrrolylmethanemethyl)cysteine.

It belongs to the HMBS family. As to quaternary structure, monomer. Requires dipyrromethane as cofactor.

The catalysed reaction is 4 porphobilinogen + H2O = hydroxymethylbilane + 4 NH4(+). The protein operates within porphyrin-containing compound metabolism; protoporphyrin-IX biosynthesis; coproporphyrinogen-III from 5-aminolevulinate: step 2/4. In terms of biological role, tetrapolymerization of the monopyrrole PBG into the hydroxymethylbilane pre-uroporphyrinogen in several discrete steps. The polypeptide is Porphobilinogen deaminase (Mesorhizobium japonicum (strain LMG 29417 / CECT 9101 / MAFF 303099) (Mesorhizobium loti (strain MAFF 303099))).